Reading from the N-terminus, the 174-residue chain is NADH-ubiquinone oxidoreductase chain 6 (174 aa).

The next 6 helical transmembrane spans lie at 1 to 21 (MTYA…GFSS), 24 to 44 (SPIY…AVIL), 47 to 67 (GGGY…MVVF), 86 to 106 (VEVL…VLWV), 111 to 131 (GVVV…EGEG), and 151 to 171 (WLVV…IEIA).

The protein belongs to the complex I subunit 6 family. In terms of assembly, core subunit of respiratory chain NADH dehydrogenase (Complex I) which is composed of 45 different subunits.

Its subcellular location is the mitochondrion inner membrane. It carries out the reaction a ubiquinone + NADH + 5 H(+)(in) = a ubiquinol + NAD(+) + 4 H(+)(out). Functionally, core subunit of the mitochondrial membrane respiratory chain NADH dehydrogenase (Complex I) which catalyzes electron transfer from NADH through the respiratory chain, using ubiquinone as an electron acceptor. Essential for the catalytic activity and assembly of complex I. This chain is NADH-ubiquinone oxidoreductase chain 6 (MT-ND6), found in Pongo abelii (Sumatran orangutan).